The following is a 721-amino-acid chain: Glucans biosynthesis glucosyltransferase H (721 aa).

7 helical membrane passes run 54–74 (LIMVATAVLSAAGIYEMYQVL), 85–105 (VVLVLFAALFAWVALSFVSAL), 404–424 (GIGAYLTAPMWLAFLVAGILI), 458–478 (FAGTMGLLILPKLLALLLVLI), 493–513 (FGGVLLETMISALTAPVMMVF), 548–568 (YALPTALGATMAVGAWLVSWP), and 569–589 (LLLWMTPVIVGLLLAIPVALL).

The protein belongs to the glycosyltransferase 2 family. OpgH subfamily.

The protein localises to the cell inner membrane. It functions in the pathway glycan metabolism; osmoregulated periplasmic glucan (OPG) biosynthesis. Its function is as follows. Involved in the biosynthesis of osmoregulated periplasmic glucans (OPGs). In Rhodopseudomonas palustris (strain TIE-1), this protein is Glucans biosynthesis glucosyltransferase H.